A 311-amino-acid chain; its full sequence is MEQFDQLVLNSISAKALKSYLTTKIAEAIDELAAKKNSPKKKAQTKKPENRIPLDLINKNFVSKFGLKGYKDGVLNSLICSLVENNYFENGKLKRGKHDELVLLDIEKEILARIDENSSLNIDVLDVKVLANRLRTNADRFEFKGHTYYLEQNKTEDIINQLIKNSAISMDMKNTIKDTFYMISDELLDVFKNRLFKCPQVKDNIISRARLYEYFIKATKPDDSKIYVILKDDNIAKILNIETIVIDHFIYTKHSLLVSSISNQIDKYSKKFNDQFYSSISEYIKDNEKINLSKVIEYLTISTVKIENTVE.

It belongs to the chordopoxvirinae I1 family.

It localises to the virion. Its function is as follows. Late DNA-binding protein which binds to the hairpin form of the viral telomeric sequence. Required for the production of mature virions (MV). In Fowlpox virus (strain NVSL) (FPV), this protein is Telomere-binding protein I1 homolog.